Consider the following 525-residue polypeptide: Sterol O-acyltransferase 2 (525 aa).

Disordered stretches follow at residues 1-34 (MQPKVPQLRRREGLGEEQEKGARGGEGNARTHGT) and 77-97 (QDRPLPSAAPDSTSKTQELHP). Residues 1–119 (MQPKVPQLRR…IDELMEVQHF (119 aa)) lie on the Cytoplasmic side of the membrane. The span at 9–23 (RRREGLGEEQEKGAR) shows a compositional bias: basic and acidic residues. H118 provides a ligand contact to cholesterol. A helical transmembrane segment spans residues 120-141 (RTIYHMFIAGLCVLIISTLAID). The Lumenal segment spans residues 142 to 161 (FIDEGRLMLEFDLLLFSFGQ). The chain crosses the membrane as a helical span at residues 162–187 (LPLALMTWVPMFLSTLLVPYQTLWLW). Topologically, residues 188–199 (ARPRAGGAWMLG) are cytoplasmic. A helical membrane pass occupies residues 200–223 (ASLGCVLLAAHAVVLCVLPVHVSV). At 224–231 (RHELPPAS) the chain is on the lumenal side. The chain crosses the membrane as a helical span at residues 232 to 255 (RCVLVFEQVRLLMKSYSFLRETVP). The Cytoplasmic segment spans residues 256–296 (GIFCVRGGKGISPPSFSSYLYFLFCPTLIYRETYPRTPSIR). C280 carries the cysteine sulfenic acid (-SOH); alternate modification. C280 participates in a covalent cross-link: Glycyl cysteine thioester (Cys-Gly) (interchain with G-Cter in ubiquitin); alternate. The helical transmembrane segment at 297 to 329 (WNYVAKNFAQVLGCLLYACFILGRLCVPVFANM) threads the bilayer. The Lumenal portion of the chain corresponds to 330 to 346 (SREPFSTRALLLSILHA). The helical transmembrane segment at 347 to 372 (TGPGIFMLLLIFFAFLHCWLNAFAEM) threads the bilayer. The Cytoplasmic segment spans residues 373–420 (LRFGDRMFYRDWWNSTSFSNYYRTWNVVVHDWLYSYVYQDGLWLLGRR). Positions 380–386 (FYRDWWN) match the FYXDWWN motif motif. An acyl-CoA contacts are provided by N392, R395, N398, H402, Y410, and S433. A helical transmembrane segment spans residues 421 to 445 (ARGVAMLGVFLVSAVVHEYIFCFVL). The active site involves H437. Residues 446 to 451 (GFFYPV) lie on the Lumenal side of the membrane. Residues 452–467 (MLMLFLVFGGLLNFTM) traverse the membrane as a helical segment. The Cytoplasmic segment spans residues 468–473 (NDRHTG). Residues 474–505 (PAWNILMWTFLFMGQGIQVSLYCQEWYARRHC) form a helical membrane-spanning segment. The Lumenal portion of the chain corresponds to 506–525 (PLPQTTFWGMVTPRSWSCHP).

This sequence belongs to the membrane-bound acyltransferase family. Sterol o-acyltransferase subfamily. As to quaternary structure, may form homo- or heterodimers. Interacts with INSIG1; the interaction is direct and promotes association with AMFR/gp78. In terms of processing, polyubiquitinated by AMFR/gp78 at Cys-280, leading to its degradation when the lipid levels are low. Association with AMFR/gp78 is mediated via interaction with INSIG1. High concentration of cholesterol and fatty acid results in Cys-280 oxidation, preventing ubiquitination at the same site, resulting in protein stabilization. Post-translationally, oxidized at Cys-280: high concentration of cholesterol and fatty acid induce reactive oxygen species, which oxidizes Cys-280, preventing ubiquitination at the same site, and resulting in protein stabilization.

It localises to the endoplasmic reticulum membrane. The enzyme catalyses a sterol + a long-chain fatty acyl-CoA = a long-chain 3-hydroxysterol ester + CoA. It catalyses the reaction cholesterol + an acyl-CoA = a cholesterol ester + CoA. It carries out the reaction cholesterol + (9Z)-octadecenoyl-CoA = cholesteryl (9Z-octadecenoate) + CoA. The catalysed reaction is (5Z,8Z,11Z,14Z,17Z)-eicosapentaenoyl-CoA + cholesterol = (5Z,8Z,11Z,14Z,17Z-eicosapentaenoyl)-cholesterol + CoA. The enzyme catalyses (9Z,12Z,15Z)-octadecatrienoyl-CoA + cholesterol = (9Z,12Z,15Z-octadecatrienoyl)-cholesterol + CoA. It catalyses the reaction (5Z,8Z,11Z,14Z)-eicosatetraenoyl-CoA + cholesterol = cholesteryl (5Z,8Z,11Z,14Z)-eicosatetraenoate + CoA. Functionally, catalyzes the formation of fatty acid-cholesterol esters, which are less soluble in membranes than cholesterol. Plays a role in lipoprotein assembly and dietary cholesterol absorption. Utilizes oleoyl-CoA ((9Z)-octadecenoyl-CoA) and linolenoyl-CoA ((9Z,12Z,15Z)-octadecatrienoyl-CoA) as substrates. May provide cholesteryl esters for lipoprotein secretion from hepatocytes and intestinal mucosa. This chain is Sterol O-acyltransferase 2, found in Mus musculus (Mouse).